The chain runs to 343 residues: Ribosomal RNA small subunit methyltransferase C (343 aa).

This sequence belongs to the methyltransferase superfamily. RsmC family. As to quaternary structure, monomer.

It localises to the cytoplasm. It catalyses the reaction guanosine(1207) in 16S rRNA + S-adenosyl-L-methionine = N(2)-methylguanosine(1207) in 16S rRNA + S-adenosyl-L-homocysteine + H(+). Specifically methylates the guanine in position 1207 of 16S rRNA in the 30S particle. The chain is Ribosomal RNA small subunit methyltransferase C from Escherichia coli O157:H7.